Consider the following 353-residue polypeptide: MLLWYTTASIMRYLMVFMLFGIQCAAAIIYRGNYISLYVNSSATSIFLKGNNNDASIRGRFLFIGDQFPVTNTYNVTVELLHVNQTTLCLQPLYRVMYGECPRIRTGAIIACRVKRSWHYENATQLTDPNVEIIFKMNNTKVEDAGIYLLVVQLDYTSLFDIFFVSLNVYPKQDTSNEDVNYFPPVYSPSHILNTFKICHKFPVHNGMEQSILQHIVTSDVDTETENLSWQKDDLGSTQKPRKNFNPDVKVNVTHETRKTLMESSADVFMIAVPITASLLVILAIIIVVTVGIYRRRSSEKRKIYRPKRTKEQASTEKRERSESDVLLEAAVARLETIQEENPPHSVINPFTK.

Residues 1–20 (MLLWYTTASIMRYLMVFMLF) form the signal peptide. Residues 21-274 (GIQCAAAIIY…SADVFMIAVP (254 aa)) are Virion surface-facing. N-linked (GlcNAc...) asparagine; by host glycans are attached at residues Asn-40, Asn-75, Asn-84, Asn-122, Asn-138, Asn-227, and Asn-252. The chain crosses the membrane as a helical span at residues 275-293 (ITASLLVILAIIIVVTVGI). The Intravirion segment spans residues 294–353 (YRRRSSEKRKIYRPKRTKEQASTEKRERSESDVLLEAAVARLETIQEENPPHSVINPFTK). Residues 303-324 (KIYRPKRTKEQASTEKRERSES) are disordered. Basic and acidic residues predominate over residues 310-324 (TKEQASTEKRERSES).

It belongs to the alphaherpesvirinae glycoprotein I family. In terms of assembly, interacts with gE.

It is found in the virion membrane. Its subcellular location is the host cell membrane. It localises to the host cell junction. The protein localises to the host Golgi apparatus membrane. In epithelial cells, the heterodimer gE/gI is required for the cell-to-cell spread of the virus, by sorting nascent virions to cell junctions. Once the virus reaches the cell junctions, virus particles can spread to adjacent cells extremely rapidly through interactions with cellular receptors that accumulate at these junctions. Implicated in basolateral spread in polarized cells. In neuronal cells, gE/gI is essential for the anterograde spread of the infection throughout the host nervous system. Together with US9, the heterodimer gE/gI is involved in the sorting and transport of viral structural components toward axon tips. The sequence is that of Envelope glycoprotein I (gI) from Chlorocebus aethiops (Green monkey).